Here is a 67-residue protein sequence, read N- to C-terminus: Sec-independent protein translocase protein TatA (67 aa).

The helical transmembrane segment at 1-21 threads the bilayer; the sequence is MMPGPFELIVILVIVLLLFGG.

The protein belongs to the TatA/E family. As to quaternary structure, the Tat system comprises two distinct complexes: a TatABC complex, containing multiple copies of TatA, TatB and TatC subunits, and a separate TatA complex, containing only TatA subunits. Substrates initially bind to the TatABC complex, which probably triggers association of the separate TatA complex to form the active translocon.

Its subcellular location is the cell inner membrane. Its function is as follows. Part of the twin-arginine translocation (Tat) system that transports large folded proteins containing a characteristic twin-arginine motif in their signal peptide across membranes. TatA could form the protein-conducting channel of the Tat system. In Ruthia magnifica subsp. Calyptogena magnifica, this protein is Sec-independent protein translocase protein TatA.